The primary structure comprises 539 residues: Chaperonin GroEL 2 (539 aa).

Residues 29–32 (TIGP), 86–90 (DGTTT), G414, 479–481 (DAL), and D495 contribute to the ATP site.

The protein belongs to the chaperonin (HSP60) family. Forms a cylinder of 14 subunits composed of two heptameric rings stacked back-to-back. Interacts with the co-chaperonin GroES.

Its subcellular location is the cytoplasm. The enzyme catalyses ATP + H2O + a folded polypeptide = ADP + phosphate + an unfolded polypeptide.. Together with its co-chaperonin GroES, plays an essential role in assisting protein folding. The GroEL-GroES system forms a nano-cage that allows encapsulation of the non-native substrate proteins and provides a physical environment optimized to promote and accelerate protein folding. The sequence is that of Chaperonin GroEL 2 from Synechococcus sp. (strain JA-2-3B'a(2-13)) (Cyanobacteria bacterium Yellowstone B-Prime).